The chain runs to 272 residues: Dihydropteroate synthase (272 aa).

Residues 1-251 form the Pterin-binding domain; that stretch reads MIKTKIMGIL…GVRVHNVLLN (251 aa). Residue Asn-11 participates in Mg(2+) binding. (7,8-dihydropterin-6-yl)methyl diphosphate is bound by residues Thr-51, Asp-89, Asn-108, Asp-172, Lys-208, and 244-246; that span reads RVH.

Belongs to the DHPS family. In terms of assembly, homodimer. Mg(2+) serves as cofactor.

It carries out the reaction (7,8-dihydropterin-6-yl)methyl diphosphate + 4-aminobenzoate = 7,8-dihydropteroate + diphosphate. The protein operates within cofactor biosynthesis; tetrahydrofolate biosynthesis; 7,8-dihydrofolate from 2-amino-4-hydroxy-6-hydroxymethyl-7,8-dihydropteridine diphosphate and 4-aminobenzoate: step 1/2. Catalyzes the condensation of para-aminobenzoate (pABA) with 6-hydroxymethyl-7,8-dihydropterin diphosphate (DHPt-PP) to form 7,8-dihydropteroate (H2Pte), the immediate precursor of folate derivatives. This is Dihydropteroate synthase (folP) from Staphylococcus epidermidis (strain ATCC 35984 / DSM 28319 / BCRC 17069 / CCUG 31568 / BM 3577 / RP62A).